Here is a 261-residue protein sequence, read N- to C-terminus: uncharacterized protein (261 aa).

Residue Glu46 is part of the active site.

It belongs to the PhzF family.

This is an uncharacterized protein from Pseudomonas aeruginosa (strain ATCC 15692 / DSM 22644 / CIP 104116 / JCM 14847 / LMG 12228 / 1C / PRS 101 / PAO1).